The chain runs to 307 residues: Ornithine carbamoyltransferase (307 aa).

Residues 53–56 (STRT), Gln-80, Arg-104, and 131–134 (HPCQ) contribute to the carbamoyl phosphate site. Residues Asn-162, Asp-220, and 224-225 (SM) each bind L-ornithine. Residues 260–261 (CL) and Arg-288 each bind carbamoyl phosphate.

It belongs to the aspartate/ornithine carbamoyltransferase superfamily. OTCase family.

It is found in the cytoplasm. It carries out the reaction carbamoyl phosphate + L-ornithine = L-citrulline + phosphate + H(+). Its pathway is amino-acid biosynthesis; L-arginine biosynthesis; L-arginine from L-ornithine and carbamoyl phosphate: step 1/3. In terms of biological role, reversibly catalyzes the transfer of the carbamoyl group from carbamoyl phosphate (CP) to the N(epsilon) atom of ornithine (ORN) to produce L-citrulline. The sequence is that of Ornithine carbamoyltransferase from Nitrosomonas europaea (strain ATCC 19718 / CIP 103999 / KCTC 2705 / NBRC 14298).